Here is a 387-residue protein sequence, read N- to C-terminus: Muscleblind-like protein 1 (387 aa).

The residue at position 6 (T6) is a Phosphothreonine. 4 C3H1-type zinc fingers span residues 13 to 41, 47 to 73, 178 to 206, and 214 to 240; these read WLTLEVCREFQRGTCSRPDTECKFAHPSK, NGRVIACFDSLKGRCSRENCKYLHPPP, TDRLEVCREYQRGNCNRGENDCRFAHPAD, and DNTVTVCMDYIKGRCSREKCKYFHPPA.

The protein belongs to the muscleblind family. As to quaternary structure, interacts with DDX1 and YBX1. Interacts with HNRNPH1; the interaction in RNA-independent. Interacts with RBPMS; the interaction allows cooperative assembly of RNA-bound stable cell-specific alternative splicing regulatory complexes.

It localises to the nucleus. It is found in the cytoplasm. Its subcellular location is the cytoplasmic granule. Its function is as follows. Mediates pre-mRNA alternative splicing regulation. Acts either as activator or repressor of splicing on specific pre-mRNA targets. Inhibits cardiac troponin-T (TNNT2) pre-mRNA exon inclusion but induces insulin receptor (IR) pre-mRNA exon inclusion in muscle. Antagonizes the alternative splicing activity pattern of CELF proteins. Regulates the TNNT2 exon 5 skipping through competition with U2AF2. Inhibits the formation of the spliceosome A complex on intron 4 of TNNT2 pre-mRNA. Binds to the stem-loop structure within the polypyrimidine tract of TNNT2 intron 4 during spliceosome assembly. Binds to the 5'-YGCU(U/G)Y-3'consensus sequence. Binds to the IR RNA. Binds to expanded CUG repeat RNA, which folds into a hairpin structure containing GC base pairs and bulged, unpaired U residues. Together with RNA binding proteins RBPMS and RBFOX2, activates vascular smooth muscle cells alternative splicing events. Regulates NCOR2 alternative splicing. The chain is Muscleblind-like protein 1 from Rattus norvegicus (Rat).